The sequence spans 155 residues: Small ribosomal subunit protein uS7cz/uS7cy (155 aa).

Belongs to the universal ribosomal protein uS7 family. Part of the 30S ribosomal subunit.

The protein localises to the plastid. It is found in the chloroplast. Functionally, one of the primary rRNA binding proteins, it binds directly to 16S rRNA where it nucleates assembly of the head domain of the 30S subunit. The chain is Small ribosomal subunit protein uS7cz/uS7cy (rps7-A) from Anthoceros angustus (Hornwort).